A 51-amino-acid polypeptide reads, in one-letter code: Large ribosomal subunit protein eL39y (51 aa).

The segment at Met-1–Arg-21 is disordered. A compositionally biased stretch (basic residues) spans Phe-7 to Gln-19.

It belongs to the eukaryotic ribosomal protein eL39 family.

This Arabidopsis thaliana (Mouse-ear cress) protein is Large ribosomal subunit protein eL39y (RPL39B).